We begin with the raw amino-acid sequence, 456 residues long: Putative F-box/LRR-repeat protein At5g02700 (456 aa).

The 47-residue stretch at 26–72 (ADFINYMPDDILHHILSFIPTDLAMRTSVLSRRWRHVWCETPCLDIT) folds into the F-box domain. LRR repeat units lie at residues 126–154 (VRDF…DVTL), 177–202 (FCQI…TLDT), 206–224 (LERL…DINQ), 271–300 (LSPL…TVGE), and 330–355 (FVRS…RPST).

In Arabidopsis thaliana (Mouse-ear cress), this protein is Putative F-box/LRR-repeat protein At5g02700.